We begin with the raw amino-acid sequence, 224 residues long: TBP-related factor (224 aa).

The interval Arg-14–Gln-34 is disordered. A compositionally biased stretch (low complexity) spans Val-17 to Gln-34. 2 consecutive repeat copies span residues Leu-51–Leu-127 and Leu-141–Leu-218.

This sequence belongs to the TBP family. As to expression, primary spermatocytes in the adult testis and in a subset of cells in the dorsal medial region of the embryonic CNS.

The protein resides in the nucleus. Its function is as follows. Acts as a transcription factor. Binds to the TATA box promoter element which lies close to the position of transcription initiation. May be essential for embryonic development. This chain is TBP-related factor (Trf), found in Drosophila melanogaster (Fruit fly).